The primary structure comprises 717 residues: MPSFLLEVGTEELPANFVDEAIAQWQSRIPSSLEEQQLTPEGIEFYGTPRRLAVLIKGLPAKQSDRIEEVKGPAANVAFKSGKPTKALEGFVRKQGVTPDEVEIRDTDKGEFVFVQKNITGRNTTEILQELVPQWITQLEGRRFMRWGDGDLRFPRPIRWLVTLWDQDILPLELVNGATQVKSDRLTYGHRILAPESVSIPEASAYQKSLQQAYVEVSPLQRRQTIEQQIEKVAKQLKGVAVIPPDLLDEVVNLVEYPSAVAGNFEPDFLNLPTEVITTVMVTHQRYFPVKATGKTNKNNTLLPYFITISNGDPNKGEIIAAGNERVIRARLADAQFFYKADCDEPLESYLPQLETVTFQEQLGTIRDKVDRIMEISQLIADQLDLDSGERSEIESTAMLCKADLVTQMVYEFPELQGVMGQKYALASGESPNVALGIFEHYLPRGADDIMPESLTGQVVGLADRIDTIVSIFGLGMIPTGSGDPFALRRAATGIIKVTWYAELPIDILDLLEQSSQDFVTAHPDKTSPIESLKSFFIQRLSTLLQDDLHIDYDLVNAVLGENDPEYTERALRDLLDVRDRAQFLQSIRNNQKIDEIYETVNRSARLAVKGELDTQELDPEKVIRPALFEKSSEEHFYKVLIDLVPTTLTAQRERNYQLLVDALGKIAPTVSNFFDGEDSVLVMDENLEVRENRLNLLGLLRNHARVLADFGAIVKS.

The protein belongs to the class-II aminoacyl-tRNA synthetase family. In terms of assembly, tetramer of two alpha and two beta subunits.

The protein resides in the cytoplasm. The enzyme catalyses tRNA(Gly) + glycine + ATP = glycyl-tRNA(Gly) + AMP + diphosphate. The polypeptide is Glycine--tRNA ligase beta subunit (Gloeothece citriformis (strain PCC 7424) (Cyanothece sp. (strain PCC 7424))).